The chain runs to 424 residues: Light-independent protochlorophyllide reductase subunit N (424 aa).

The [4Fe-4S] cluster site is built by Cys16, Cys41, and Cys102.

It belongs to the BchN/ChlN family. In terms of assembly, protochlorophyllide reductase is composed of three subunits; ChlL, ChlN and ChlB. Forms a heterotetramer of two ChlB and two ChlN subunits. The cofactor is [4Fe-4S] cluster.

It catalyses the reaction chlorophyllide a + oxidized 2[4Fe-4S]-[ferredoxin] + 2 ADP + 2 phosphate = protochlorophyllide a + reduced 2[4Fe-4S]-[ferredoxin] + 2 ATP + 2 H2O. The protein operates within porphyrin-containing compound metabolism; chlorophyll biosynthesis (light-independent). In terms of biological role, component of the dark-operative protochlorophyllide reductase (DPOR) that uses Mg-ATP and reduced ferredoxin to reduce ring D of protochlorophyllide (Pchlide) to form chlorophyllide a (Chlide). This reaction is light-independent. The NB-protein (ChlN-ChlB) is the catalytic component of the complex. This chain is Light-independent protochlorophyllide reductase subunit N, found in Synechococcus sp. (strain WH7803).